Here is a 396-residue protein sequence, read N- to C-terminus: Argininosuccinate synthase (396 aa).

An ATP-binding site is contributed by 9–17; that stretch reads AYSGGLDTS. Position 85 (tyrosine 85) interacts with L-citrulline. Glycine 115 is an ATP binding site. Residues threonine 117, asparagine 121, and aspartate 122 each coordinate L-aspartate. Asparagine 121 is a binding site for L-citrulline. L-citrulline is bound by residues arginine 125, serine 173, glutamate 258, and tyrosine 270.

The protein belongs to the argininosuccinate synthase family. Type 1 subfamily. As to quaternary structure, homotetramer.

The protein localises to the cytoplasm. It carries out the reaction L-citrulline + L-aspartate + ATP = 2-(N(omega)-L-arginino)succinate + AMP + diphosphate + H(+). Its pathway is amino-acid biosynthesis; L-arginine biosynthesis; L-arginine from L-ornithine and carbamoyl phosphate: step 2/3. In Streptococcus agalactiae serotype III (strain NEM316), this protein is Argininosuccinate synthase.